A 373-amino-acid polypeptide reads, in one-letter code: L-threonine 3-dehydrogenase, mitochondrial (373 aa).

NAD(+) is bound by residues 62-67 (GGLGQL), 88-90 (DIR), 106-107 (DI), Tyr-195, Lys-199, and Ile-225. The active-site Proton donor/acceptor is Tyr-195.

Belongs to the NAD(P)-dependent epimerase/dehydratase family. As to quaternary structure, homodimer.

It is found in the mitochondrion. It catalyses the reaction L-threonine + NAD(+) = (2S)-2-amino-3-oxobutanoate + NADH + H(+). It participates in amino-acid degradation; L-threonine degradation via oxydo-reductase pathway; glycine from L-threonine: step 1/2. Its function is as follows. Catalyzes the NAD(+)-dependent oxidation of L-threonine to 2-amino-3-ketobutyrate, mediating L-threonine catabolism. This chain is L-threonine 3-dehydrogenase, mitochondrial, found in Bos taurus (Bovine).